Consider the following 206-residue polypeptide: Probable GTP-binding protein EngB (206 aa).

An EngB-type G domain is found at 27–201; that stretch reads SGIEVAFAGR…EEKLNQWYSK (175 aa). Residues 35–42, 62–66, 80–83, 147–150, and 180–182 contribute to the GTP site; these read GRSNAGKS, GRTQL, DLPG, TKAD, and FSS. Residues S42 and T64 each contribute to the Mg(2+) site.

Belongs to the TRAFAC class TrmE-Era-EngA-EngB-Septin-like GTPase superfamily. EngB GTPase family. Mg(2+) serves as cofactor.

Functionally, necessary for normal cell division and for the maintenance of normal septation. The chain is Probable GTP-binding protein EngB from Idiomarina loihiensis (strain ATCC BAA-735 / DSM 15497 / L2-TR).